The chain runs to 528 residues: Ladinin-1 (528 aa).

Residues 1–404 are disordered; the sequence is MSVSRKDWSA…NSETPLTRSA (404 aa). Serine 38, serine 56, serine 62, serine 72, and serine 76 each carry phosphoserine. A compositionally biased stretch (basic residues) spans 88 to 97; sequence RTRKERRQRR. Position 119 is a phosphoserine (serine 119). Basic and acidic residues predominate over residues 134–173; it reads KKVEALPRRRLSREQRGPWAQDEERLKNRELAEGEKRLPE. 4 SEK repeats span residues 184-186, 190-192, 202-204, and 208-210; these read SEK. Positions 184–281 are 6 X SEK repeats; that stretch reads SEKTPVSEKT…MQERKLVSEK (98 aa). Composition is skewed to basic and acidic residues over residues 218–231 and 267–279; these read SLTEKRHSPEKLVP and IVSEKMQERKLVS. 2 SEK repeats span residues 269 to 271 and 279 to 281; these read SEK. Over residues 304 to 316 the composition is skewed to polar residues; that stretch reads EQPQTTGGSQATT. 5 positions are modified to phosphoserine: serine 328, serine 358, serine 367, serine 405, and serine 496. The span at 365-377 shows a compositional bias: low complexity; the sequence is TPSPTLLTYSSSL. Residues 492 to 528 are disordered; the sequence is KTQDSGDHGSQEVRKEASVTKRAQWGSKPSTSLDAEV. Residues 495 to 510 show a composition bias toward basic and acidic residues; sequence DSGDHGSQEVRKEASV. Residues 518 to 528 are compositionally biased toward polar residues; the sequence is SKPSTSLDAEV.

Expressed in kidney, lung and keratinocytes followed by liver, spleen and brain. Not expressed in testis, skeletal and heart muscle and in fibroblasts.

Its subcellular location is the secreted. The protein localises to the extracellular space. It localises to the extracellular matrix. It is found in the basement membrane. Functionally, anchoring filament protein which is a component of the basement membrane zone. This Mus musculus (Mouse) protein is Ladinin-1 (Lad1).